A 354-amino-acid polypeptide reads, in one-letter code: Uroporphyrinogen decarboxylase (354 aa).

Residues 27–31, aspartate 77, tyrosine 154, threonine 209, and histidine 327 each bind substrate; that span reads RQAGR.

The protein belongs to the uroporphyrinogen decarboxylase family. Homodimer.

The protein localises to the cytoplasm. The catalysed reaction is uroporphyrinogen III + 4 H(+) = coproporphyrinogen III + 4 CO2. It participates in porphyrin-containing compound metabolism; protoporphyrin-IX biosynthesis; coproporphyrinogen-III from 5-aminolevulinate: step 4/4. Its function is as follows. Catalyzes the decarboxylation of four acetate groups of uroporphyrinogen-III to yield coproporphyrinogen-III. The sequence is that of Uroporphyrinogen decarboxylase from Salmonella paratyphi A (strain ATCC 9150 / SARB42).